The following is a 209-amino-acid chain: RNA chaperone ProQ (209 aa).

Residues 101 to 155 form a disordered region; that stretch reads LAESKAKVQARRKEQAQKAREEGKAKAKPAANKKPQQPRRTNKPKVQKPTKPVET. Basic and acidic residues predominate over residues 111 to 125; that stretch reads RRKEQAQKAREEGKA. Residues 136–148 are compositionally biased toward basic residues; it reads QQPRRTNKPKVQK.

The protein belongs to the ProQ family.

It localises to the cytoplasm. Its function is as follows. RNA chaperone with significant RNA binding, RNA strand exchange and RNA duplexing activities. This Vibrio parahaemolyticus serotype O3:K6 (strain RIMD 2210633) protein is RNA chaperone ProQ.